The primary structure comprises 1005 residues: Translation initiation factor IF-2 (1005 aa).

Disordered regions lie at residues 54–337 (KYVP…RRPQ) and 368–414 (PKPK…PTSV). Polar residues predominate over residues 58–73 (SPSTHSMPPTRPTSHS). Residues 75-86 (PLPPQPGKPQPK) are compositionally biased toward pro residues. Positions 146–157 (GSNSPSHSESTP) are enriched in polar residues. 2 stretches are compositionally biased toward low complexity: residues 189 to 198 (PSPAAMAGRA) and 222 to 240 (VESAPVATATPAPASPRAE). The span at 258–274 (PRSETSEDGARRGEKLV) shows a compositional bias: basic and acidic residues. The span at 392-401 (GGRKLSRRDR) shows a compositional bias: basic residues. In terms of domain architecture, tr-type G spans 495-668 (RRPPVVTIMG…LLVSEVEDLY (174 aa)). The G1 stretch occupies residues 504–511 (GHVDHGKT). 504–511 (GHVDHGKT) is a GTP binding site. The segment at 529–533 (GITQH) is G2. The G3 stretch occupies residues 554-557 (DTPG). GTP-binding positions include 554–558 (DTPGH) and 608–611 (NKID). The tract at residues 608-611 (NKID) is G4. Residues 644–646 (SAI) are G5.

It belongs to the TRAFAC class translation factor GTPase superfamily. Classic translation factor GTPase family. IF-2 subfamily.

Its subcellular location is the cytoplasm. Its function is as follows. One of the essential components for the initiation of protein synthesis. Protects formylmethionyl-tRNA from spontaneous hydrolysis and promotes its binding to the 30S ribosomal subunits. Also involved in the hydrolysis of GTP during the formation of the 70S ribosomal complex. This is Translation initiation factor IF-2 from Cyanothece sp. (strain PCC 7425 / ATCC 29141).